The following is a 757-amino-acid chain: Chloride anion exchanger (757 aa).

Residues M1 to E71 lie on the Cytoplasmic side of the membrane. Residues W72–L92 traverse the membrane as a helical segment. Residue A93 is a topological domain, extracellular. A helical transmembrane segment spans residues F94–I114. The Cytoplasmic segment spans residues T115 to H124. Residues I125–V145 form a helical membrane-spanning segment. The Extracellular portion of the chain corresponds to S146 to T176. Residues N149 and N161 are each glycosylated (N-linked (GlcNAc...) asparagine). The chain crosses the membrane as a helical span at residues V177 to Y197. The Cytoplasmic portion of the chain corresponds to L198–S201. A helical membrane pass occupies residues L202–M222. The Extracellular portion of the chain corresponds to L223–T250. Residues N251–I271 traverse the membrane as a helical segment. Residues N272 to K278 lie on the Cytoplasmic side of the membrane. The helical transmembrane segment at L279 to G299 threads the bilayer. Residues C300–D335 are Extracellular-facing. The chain crosses the membrane as a helical span at residues S336–L356. The Cytoplasmic segment spans residues K357–E367. The helical transmembrane segment at L368 to T388 threads the bilayer. At A389–Q404 the chain is on the extracellular side. A helical membrane pass occupies residues V405 to L425. Residues Q426 to C462 are Cytoplasmic-facing. Residues L463–A483 traverse the membrane as a helical segment. Residues S484 to F757 lie on the Extracellular side of the membrane. Residues N518–I713 enclose the STAS domain. The short motif at E754–F757 is the PDZ-binding element.

It belongs to the SLC26A/SulP transporter (TC 2.A.53) family. Interacts with PDZK1. Interacts with CFTR, SLC26A6 and NHERF1. Interacts (via PDZ-binding motif) with NHERF4 (via the third PDZ domain). This interaction leads to decreased expression of SLC26A3 on the cell membrane resulting in its reduced exchanger activity. Post-translationally, N-glycosylation is required for efficient cell surface expression, and protection from proteolytic degradation. In terms of tissue distribution, expressed in spermatogenic cells. Expressed at high levels in cecum and colon and at lower levels in small intestine.

Its subcellular location is the apical cell membrane. The protein localises to the membrane. It is found in the cell membrane. The catalysed reaction is hydrogencarbonate(in) + 2 chloride(out) = hydrogencarbonate(out) + 2 chloride(in). Functionally, mediates chloride-bicarbonate exchange with a chloride bicarbonate stoichiometry of 2:1 in the intestinal epithelia. Plays a role in the chloride and bicarbonate homeostasis during sperm epididymal maturation and capacitation. The protein is Chloride anion exchanger (Slc26a3) of Mus musculus (Mouse).